A 433-amino-acid polypeptide reads, in one-letter code: Sensor protein RstB (433 aa).

Over 1–3 (MKK) the chain is Cytoplasmic. The helical transmembrane segment at 4–24 (LFIQFYLLLFVCFLVMSLLVG) threads the bilayer. The Periplasmic segment spans residues 25 to 135 (LVYKFTAERA…PYLYYLHQMR (111 aa)). The chain crosses the membrane as a helical span at residues 136–156 (LLDIALIAFIAISLAFPVFIW). Residues 157–433 (MRPHWQDMLK…WHNIPQFTSA (277 aa)) lie on the Cytoplasmic side of the membrane. The HAMP domain occupies 158 to 210 (RPHWQDMLKLEAAAQRFGDGHLNERIHFDEGSSFERLGVAFNQMADNINALIA). Residues 218-425 (GIAHELRTPL…RFSFSWPLWH (208 aa)) enclose the Histidine kinase domain. The residue at position 276 (histidine 276) is a Phosphohistidine; by autocatalysis.

Post-translationally, autophosphorylated.

It localises to the cell inner membrane. It catalyses the reaction ATP + protein L-histidine = ADP + protein N-phospho-L-histidine.. In terms of biological role, member of the two-component regulatory system RstB/RstA. RstB functions as a membrane-associated protein kinase that phosphorylates RstA. In Escherichia coli (strain K12), this protein is Sensor protein RstB (rstB).